A 269-amino-acid chain; its full sequence is Zinc transporter ZupT (269 aa).

The next 8 membrane-spanning stretches (helical) occupy residues 11 to 31 (IALAVTLAAGLATAIGSLLVL), 40 to 60 (LLAFGLAFAGGAMVYVSLSEI), 80 to 100 (YGTLAFLAGVIVIVLIDHFIP), 125 to 145 (ALLTSVAITAHNFPEGLATFF), 158 to 178 (AFAIAIHNIPEGIAIAVPVYF), 187 to 207 (FSASLLSGLAEPVGAALGYWL), 217 to 237 (FGWVFGLIAGVMVFLALDELL), and 249 to 269 (TVYGLVAGMGTLAISLVLFKW). Fe(2+)-binding residues include Asn-136 and Glu-139. Positions 139 and 164 each coordinate Zn(2+). Fe(2+)-binding residues include Asn-165, Glu-168, and Glu-197. Zn(2+) is bound at residue Glu-168.

The protein belongs to the ZIP transporter (TC 2.A.5) family. ZupT subfamily.

Its subcellular location is the cell inner membrane. The enzyme catalyses Zn(2+)(in) = Zn(2+)(out). In terms of biological role, mediates zinc uptake. May also transport other divalent cations. This is Zinc transporter ZupT from Stenotrophomonas maltophilia (strain K279a).